An 843-amino-acid polypeptide reads, in one-letter code: Beta-mannosidase B (843 aa).

Glu432 functions as the Proton donor in the catalytic mechanism.

The protein belongs to the glycosyl hydrolase 2 family. Beta-mannosidase B subfamily.

The catalysed reaction is Hydrolysis of terminal, non-reducing beta-D-mannose residues in beta-D-mannosides.. It participates in glycan metabolism; N-glycan degradation. Exoglycosidase that cleaves the single beta-linked mannose residue from the non-reducing end of beta-mannosidic oligosaccharides of various complexity and length. Prefers mannobiose over mannotriose and has no activity against polymeric mannan. Is also severely restricted by galactosyl substitutions at the +1 subsite. Releases the terminal mannose residue from mannobiose, mannotriose and galactosyl-mannotriose (GM3), but not from galactosyl-mannobiose (GM2) or di-galactosyl-mannopentaose (G2M5). The sequence is that of Beta-mannosidase B (mndB) from Emericella nidulans (strain FGSC A4 / ATCC 38163 / CBS 112.46 / NRRL 194 / M139) (Aspergillus nidulans).